The following is a 442-amino-acid chain: Protein trichome birefringence-like 26 (442 aa).

Residues 51–71 (FFLYFSLVALAYYFIISSLAV) form a helical; Signal-anchor for type II membrane protein membrane-spanning segment. A GDS motif motif is present at residues 164 to 166 (GDS). Positions 409–423 (DCLHWCLPGPIDSWN) match the DCXHWCLPGXXDXWN motif motif.

Belongs to the PC-esterase family. TBL subfamily.

Its subcellular location is the membrane. Its function is as follows. May be involved in the O-acetylation of mannan. May act as a bridging protein that binds pectin and other cell wall polysaccharides. Probably involved in maintaining esterification of pectins. The sequence is that of Protein trichome birefringence-like 26 (TBL26) from Arabidopsis thaliana (Mouse-ear cress).